The following is a 31-amino-acid chain: Cyclotide psybry A (31 aa).

A cross-link (cyclopeptide (Gly-Asn)) is located at residues 1-31; sequence GFNPCGETCIWFPTCHAPGCTCSIANICVRN. 3 cysteine pairs are disulfide-bonded: Cys5-Cys20, Cys9-Cys22, and Cys15-Cys28.

Post-translationally, this is a cyclic peptide.

Probably participates in a plant defense mechanism. In Psychotria brachyceras, this protein is Cyclotide psybry A.